The primary structure comprises 545 residues: Membrane protein insertase YidC (545 aa).

Residues 6 to 26 (LILFSALVLVLFLMWDAWQTD) form a helical membrane-spanning segment. Positions 34–59 (PPPPQPTASSGESSPVLPEAVPDAPP) are disordered. Helical transmembrane passes span 357–377 (LVGN…LVFF), 428–448 (GGCL…WMLL), and 505–525 (PVMF…YWVV).

This sequence belongs to the OXA1/ALB3/YidC family. Type 1 subfamily. In terms of assembly, interacts with the Sec translocase complex via SecD. Specifically interacts with transmembrane segments of nascent integral membrane proteins during membrane integration.

The protein resides in the cell inner membrane. Required for the insertion and/or proper folding and/or complex formation of integral membrane proteins into the membrane. Involved in integration of membrane proteins that insert both dependently and independently of the Sec translocase complex, as well as at least some lipoproteins. Aids folding of multispanning membrane proteins. In Nitrosococcus oceani (strain ATCC 19707 / BCRC 17464 / JCM 30415 / NCIMB 11848 / C-107), this protein is Membrane protein insertase YidC.